The chain runs to 255 residues: Syntaxin-23 (255 aa).

A disordered region spans residues 1–31 (MSFQDLEAGRGRSLASSRNINGGGSRQDTTQ). An N-acetylserine modification is found at Ser-2. The segment covering 14–31 (LASSRNINGGGSRQDTTQ) has biased composition (polar residues). One can recognise a t-SNARE coiled-coil homology domain in the interval 184 to 246 (EAVIEEREQG…AQGKSHLVRH (63 aa)).

The protein belongs to the syntaxin family. In terms of assembly, part of the t-SNARE complex. Interacts with RGS1. As to expression, expressed at higher levels in leaves, flowers and stems than in roots.

The protein localises to the membrane. In terms of biological role, may function in the docking or fusion of transport vesicles with the prevacuolar membrane. This is Syntaxin-23 (SYP23) from Arabidopsis thaliana (Mouse-ear cress).